The primary structure comprises 165 residues: MEQPLPTAAAEAAAAGGDGEAYRIRPLELADISRGFLGLLNQLSPSPPLTEEAFRARFEELAALGADHLVLVAEDAATGRLAAAGAVLVERKFIRRCGRVGHVEDVVVDAAARGRGLGERVVRRLVEHARGRGCYKVIINCTPELTGFYAKCGFVEKNVQMGLYF.

The N-acetyltransferase domain maps to 22 to 165; the sequence is YRIRPLELAD…EKNVQMGLYF (144 aa). Substrate is bound by residues serine 44, 92 to 95, and 104 to 106; these read KFIR and EDV. Residue 114–119 coordinates acetyl-CoA; sequence GRGLGE. A substrate-binding site is contributed by 135–136; the sequence is YK. 149-151 is a binding site for acetyl-CoA; that stretch reads YAK.

This sequence belongs to the acetyltransferase family. GNA1 subfamily. Homodimer. As to expression, highly expressed in the root elongation zone and at lower levels in leaves and grains.

It is found in the endoplasmic reticulum membrane. It catalyses the reaction D-glucosamine 6-phosphate + acetyl-CoA = N-acetyl-D-glucosamine 6-phosphate + CoA + H(+). The protein operates within nucleotide-sugar biosynthesis; UDP-N-acetyl-alpha-D-glucosamine biosynthesis; N-acetyl-alpha-D-glucosamine 1-phosphate from alpha-D-glucosamine 6-phosphate (route I): step 1/2. Acetyltransferase involved in de novo biosynthesis of UDP-N-acetylglucosamine (UDP-GlcNAc) in roots and is required for maintaining normal root cell shape. UDP-GlcNAc is an essential metabolite that serves as an initial sugar donor for N-glycan synthesis and thus plays an important role in protein and lipid glycosylation. The polypeptide is Glucosamine 6-phosphate N-acetyltransferase 1 (GNA1) (Oryza sativa subsp. japonica (Rice)).